The following is a 573-amino-acid chain: Proline--tRNA ligase (573 aa).

Belongs to the class-II aminoacyl-tRNA synthetase family. ProS type 1 subfamily. In terms of assembly, homodimer.

Its subcellular location is the cytoplasm. It carries out the reaction tRNA(Pro) + L-proline + ATP = L-prolyl-tRNA(Pro) + AMP + diphosphate. Its function is as follows. Catalyzes the attachment of proline to tRNA(Pro) in a two-step reaction: proline is first activated by ATP to form Pro-AMP and then transferred to the acceptor end of tRNA(Pro). As ProRS can inadvertently accommodate and process non-cognate amino acids such as alanine and cysteine, to avoid such errors it has two additional distinct editing activities against alanine. One activity is designated as 'pretransfer' editing and involves the tRNA(Pro)-independent hydrolysis of activated Ala-AMP. The other activity is designated 'posttransfer' editing and involves deacylation of mischarged Ala-tRNA(Pro). The misacylated Cys-tRNA(Pro) is not edited by ProRS. The protein is Proline--tRNA ligase of Cupriavidus necator (strain ATCC 17699 / DSM 428 / KCTC 22496 / NCIMB 10442 / H16 / Stanier 337) (Ralstonia eutropha).